Reading from the N-terminus, the 297-residue chain is UBX domain-containing protein 1 (297 aa).

N-acetylalanine is present on alanine 2. The UBA domain maps to 2 to 42 (AELTALESLIEMGFPKGRAEKALALTGNQGIEAAMDWLMEH). Residues 40–210 (MEHEDDPDVD…PSREPPTKRE (171 aa)) are disordered. The segment at 43–297 (EDDPDVDEPL…VLIVAKKCPG (255 aa)) is interaction with BRCA1. 2 stretches are compositionally biased toward basic and acidic residues: residues 86 to 122 (LTEE…ERER) and 137 to 177 (RLQE…ERAK). The stretch at 86–176 (LTEEERQEQT…KIERDKAERA (91 aa)) forms a coiled coil. The span at 187–199 (PSPPATEPGPVPS) shows a compositional bias: pro residues. Serine 199 carries the phosphoserine modification. Residue serine 200 is modified to Phosphoserine; by MAPK12. A phosphothreonine mark is found at threonine 207 and threonine 229. One can recognise a UBX domain in the interval 209–291 (REYDQCRIQV…GLVPSAVLIV (83 aa)). Serine 270 is subject to Phosphoserine.

Component of a complex required to couple retrotranslocation, ubiquitination and deglycosylation composed of NGLY1, SAKS1, AMFR, VCP and RAD23B. Interacts with HOMER2. Interacts directly with VCP. Interacts with BRCA1 and BARD1; interaction takes place when BRCA1 is not autoubiquitinated bur is strongly enhanced in the presence of autoubiquitinated BRCA1.

Its subcellular location is the cytoplasm. Functionally, ubiquitin-binding protein that interacts with the BRCA1-BARD1 heterodimer, and regulates its activity. Specifically binds 'Lys-6'-linked polyubiquitin chains. Interaction with autoubiquitinated BRCA1, leads to inhibit the E3 ubiquitin-protein ligase activity of the BRCA1-BARD1 heterodimer. Component of a complex required to couple deglycosylation and proteasome-mediated degradation of misfolded proteins in the endoplasmic reticulum that are retrotranslocated in the cytosol. The protein is UBX domain-containing protein 1 (UBXN1) of Bos taurus (Bovine).